The following is a 228-amino-acid chain: Phosphatidylserine decarboxylase proenzyme (228 aa).

S197 acts as the Schiff-base intermediate with substrate; via pyruvic acid in catalysis. S197 carries the pyruvic acid (Ser); by autocatalysis modification.

This sequence belongs to the phosphatidylserine decarboxylase family. PSD-A subfamily. In terms of assembly, heterodimer of a large membrane-associated beta subunit and a small pyruvoyl-containing alpha subunit. It depends on pyruvate as a cofactor. Post-translationally, is synthesized initially as an inactive proenzyme. Formation of the active enzyme involves a self-maturation process in which the active site pyruvoyl group is generated from an internal serine residue via an autocatalytic post-translational modification. Two non-identical subunits are generated from the proenzyme in this reaction, and the pyruvate is formed at the N-terminus of the alpha chain, which is derived from the carboxyl end of the proenzyme. The post-translation cleavage follows an unusual pathway, termed non-hydrolytic serinolysis, in which the side chain hydroxyl group of the serine supplies its oxygen atom to form the C-terminus of the beta chain, while the remainder of the serine residue undergoes an oxidative deamination to produce ammonia and the pyruvoyl prosthetic group on the alpha chain.

It is found in the cell membrane. The catalysed reaction is a 1,2-diacyl-sn-glycero-3-phospho-L-serine + H(+) = a 1,2-diacyl-sn-glycero-3-phosphoethanolamine + CO2. The protein operates within phospholipid metabolism; phosphatidylethanolamine biosynthesis; phosphatidylethanolamine from CDP-diacylglycerol: step 2/2. Functionally, catalyzes the formation of phosphatidylethanolamine (PtdEtn) from phosphatidylserine (PtdSer). In Bacteroides thetaiotaomicron (strain ATCC 29148 / DSM 2079 / JCM 5827 / CCUG 10774 / NCTC 10582 / VPI-5482 / E50), this protein is Phosphatidylserine decarboxylase proenzyme.